Consider the following 523-residue polypeptide: NAD(P)H-quinone oxidoreductase subunit 2 (523 aa).

13 helical membrane-spanning segments follow: residues 30 to 50 (VGPEAAVLVAMIATLLVDLAG), 57 to 77 (WVPPICYAGLGSALVLLALQW), 94 to 114 (LAIAFRAVVALSTLLSLLISW), 128 to 148 (AAILLAATLGGMLLCGATDLV), 182 to 202 (LLVGSAAAAVFLYGASLLYGL), 223 to 243 (AALALVFVLATVAFKIAAVPF), 255 to 275 (PTPVVAFLSVGSKAAGFALAL), 291 to 311 (LLFTVLAILSMTLGNVVALAQ), 317 to 337 (MLAYSSIGQAGFVMIGLVCGT), 345 to 365 (VLYMATYLFMNLGAFACIILF), 389 to 409 (LGLSLCLLSLGGIPPMLGFFG), 424 to 444 (VLVVVGLVTSVISIYYYIGVI), and 477 to 497 (VALVLCVLVTAVGGILSNPLF).

The protein belongs to the complex I subunit 2 family. NDH-1 can be composed of about 15 different subunits; different subcomplexes with different compositions have been identified which probably have different functions.

It localises to the cellular thylakoid membrane. It carries out the reaction a plastoquinone + NADH + (n+1) H(+)(in) = a plastoquinol + NAD(+) + n H(+)(out). The catalysed reaction is a plastoquinone + NADPH + (n+1) H(+)(in) = a plastoquinol + NADP(+) + n H(+)(out). NDH-1 shuttles electrons from an unknown electron donor, via FMN and iron-sulfur (Fe-S) centers, to quinones in the respiratory and/or the photosynthetic chain. The immediate electron acceptor for the enzyme in this species is believed to be plastoquinone. Couples the redox reaction to proton translocation, and thus conserves the redox energy in a proton gradient. Cyanobacterial NDH-1 also plays a role in inorganic carbon-concentration. The chain is NAD(P)H-quinone oxidoreductase subunit 2 from Synechococcus sp. (strain CC9311).